We begin with the raw amino-acid sequence, 310 residues long: Spermatid maturation protein 1 (310 aa).

The chain crosses the membrane as a helical span at residues 29 to 49; it reads ILLLLGLIVCINIGINLVTLL. Residues 215-238 form a disordered region; it reads ALSHKNNAAGSGGCVEGEQAQGQP. Positions 262 to 286 form a coiled coil; sequence VYDARDVRRRLRELTQEVEALSHCY.

In terms of tissue distribution, testis-specific. Exclusively present in cytoplasm of steps 14-16 elongated spermatids (at protein level).

Its subcellular location is the membrane. The protein resides in the cytoplasm. In terms of biological role, required for proper cytoplasm removal during spermatogenesis. This Mus musculus (Mouse) protein is Spermatid maturation protein 1 (Spem1).